The following is a 534-amino-acid chain: tRNA uridine(34) acetyltransferase (534 aa).

Positions 70 to 330 (KPVRTISGVA…GEFKPYREEE (261 aa)) are radical S-adenosyl-L-methionine (rSAM). The Radical SAM core domain occupies 73–344 (RTISGVAVVA…ISYAKSIMPK (272 aa)). Cysteine 90, cysteine 95, and cysteine 98 together coordinate [4Fe-4S] cluster. Acetyl-CoA is bound at residue lysine 150. An intrachain disulfide couples cysteine 384 to cysteine 389. One can recognise an N-acetyltransferase domain in the interval 387 to 534 (IRCREVGHVY…RVGAYMGKEL (148 aa)). Acetyl-CoA is bound by residues 461 to 464 (QLHV), 485 to 487 (YGR), and tyrosine 518.

Belongs to the ELP3 family. [4Fe-4S] cluster serves as cofactor.

It carries out the reaction uridine(34) in tRNA + acetyl-CoA + S-adenosyl-L-methionine + H2O = 5-(carboxymethyl)uridine(34) in tRNA + 5'-deoxyadenosine + L-methionine + CoA + 2 H(+). Its pathway is tRNA modification. TRNA uridine(34) acetyltransferase, which mediates formation of carboxymethyluridine in the wobble base at position 34 in tRNAs. The proposed mechanism is the following: (i) recruits S-adenosyl-L-methionine and cleaves it to generate a 5'-deoxyadenosine radical (5'-dA) in the radical S-adenosyl-L-methionine (rSAM) region, (ii) hydrolyzes acetyl-CoA in the N-acetyltransferase domain and (iii) an acetyl radical is formed by the products of the two domains and (iv) is transferred onto the C5 position of uridine(34) in the bound tRNA molecule. Does not show protein lysine acetyltransferase activity. The polypeptide is tRNA uridine(34) acetyltransferase (Methanocaldococcus infernus (strain DSM 11812 / JCM 15783 / ME)).